The primary structure comprises 419 residues: Synaptotagmin-1 (419 aa).

Residues 1–57 (MVSESHHEALAAPPVTTVATVLPSNATEPASPGEGKEDAFSKLKEKFMNELHKIPLP) lie on the Vesicular side of the membrane. The N-linked (GlcNAc...) asparagine glycan is linked to Asn-25. Residues 58 to 80 (PWALIAIAIVAVLLVLTCCFCIC) form a helical membrane-spanning segment. S-palmitoyl cysteine attachment occurs at residues Cys-75, Cys-76, Cys-78, Cys-80, and Cys-83. Topologically, residues 81-419 (KKCLFKKKNK…EVDAMLAVKK (339 aa)) are cytoplasmic. The tract at residues 108-139 (KDLGKTMKDQDDDAETGLTDGEEKEEPKEEEK) is disordered. Residues 117–131 (QDDDAETGLTDGEEK) show a composition bias toward acidic residues. A Phosphothreonine modification is found at Thr-126. Residues 133 to 379 (EPKEEEKLGK…AIGKVFVGYN (247 aa)) are phospholipid binding. In terms of domain architecture, C2 1 spans 139 to 258 (KLGKLQYSLD…DFGHVTEEWR (120 aa)). Leu-169, Asp-170, and Asp-176 together coordinate Ca(2+). A Phosphotyrosine modification is found at Tyr-227. 6 residues coordinate Ca(2+): Asp-228, Phe-229, Asp-230, Ser-233, Lys-234, and Asp-236. Ser-262 is subject to Phosphoserine. One can recognise a C2 2 domain in the interval 270-403 (KLGDICFSLR…NPRRPIAQWH (134 aa)). Ca(2+) contacts are provided by Asp-301 and Asp-307. A phosphoserine mark is found at Ser-340 and Ser-342. The Ca(2+) site is built by Asp-361, Asp-363, and Asp-369.

It belongs to the synaptotagmin family. Homotetramer. Heterodimer; heterodimerizes with SYT2 in presence of calcium. Interacts with SCAMP5. Interacts with STON2. Forms a complex with SV2B, syntaxin 1 and SNAP25. Interacts with SV2A, SV2B and SV2C. Interacts with RIMS1. Interacts with PRRT2. Interacts with DNAJC5 in a phosphorylation-dependent manner. Interacts (via N-terminus) with RAB3A. Interacts with SYT12. Interacts with calmodulin. Interacts with DNM1 (via C-terminal proline-rich domain (PRD)); this interaction facilitates vesicle fission during clathrin-mediated endocytosis (CME). Ca(2+) is required as a cofactor. In terms of processing, glycosylated.

Its subcellular location is the cytoplasmic vesicle. The protein localises to the secretory vesicle membrane. The protein resides in the secretory vesicle. It is found in the synaptic vesicle membrane. It localises to the chromaffin granule membrane. Its subcellular location is the cytoplasm. In terms of biological role, calcium sensor that participates in triggering neurotransmitter release at the synapse. May have a regulatory role in the membrane interactions during trafficking of synaptic vesicles at the active zone of the synapse. It binds acidic phospholipids with a specificity that requires the presence of both an acidic head group and a diacyl backbone. A Ca(2+)-dependent interaction between synaptotagmin and putative receptors for activated protein kinase C has also been reported. It can bind to at least three additional proteins in a Ca(2+)-independent manner; these are neurexins, syntaxin and AP2. Plays a role in dendrite formation by melanocytes. The sequence is that of Synaptotagmin-1 from Macaca fascicularis (Crab-eating macaque).